Consider the following 634-residue polypeptide: Chaperone protein HtpG (634 aa).

The interval M1–R342 is a; substrate-binding. The interval E343 to Q559 is b. The interval I560 to A634 is c.

This sequence belongs to the heat shock protein 90 family. Homodimer.

It localises to the cytoplasm. In terms of biological role, molecular chaperone. Has ATPase activity. This Ectopseudomonas mendocina (strain ymp) (Pseudomonas mendocina) protein is Chaperone protein HtpG.